The sequence spans 335 residues: Protein PXR1 (335 aa).

The G-patch domain occupies 25-71; the sequence is KSRFGHKYLEKLGWEPGKGLGHASHAMSTHIKVTIKDDTMGLGAKLK. A disordered region spans residues 155–310; the sequence is DDAEDAKVSG…PPTISTRLSV (156 aa). Basic residues predominate over residues 163–175; that stretch reads SGKHRDRKSRAKR. Basic and acidic residues predominate over residues 183-209; it reads LKEKCRDIDRTRKSKRKEKEQEKEKNR. Residues 226-257 are compositionally biased toward basic residues; sequence KKDKKDKKEKKEKKEKKEKKEKKHKEKSNKRL.

Belongs to the PINX1 family.

It is found in the nucleus. The protein resides in the nucleolus. Involved in rRNA-processing at A0, A1 and A2 sites and negatively regulates telomerase. This chain is Protein PXR1 (PXR1), found in Eremothecium gossypii (strain ATCC 10895 / CBS 109.51 / FGSC 9923 / NRRL Y-1056) (Yeast).